The primary structure comprises 2670 residues: Inositol 1,4,5-trisphosphate-gated calcium channel ITPR3 (2670 aa).

Residues 1–2233 (MNEMSSFLHI…YVEGASTGVL (2233 aa)) lie on the Cytoplasmic side of the membrane. MIR domains lie at 113 to 173 (GDVV…LRSN), 174 to 224 (GDNV…INLF), 232 to 288 (EEVL…VEVV), 295 to 372 (GGAG…LDPT), and 378 to 434 (DSFV…IVSV). Arginine 266, leucine 269, and arginine 270 together coordinate 1D-myo-inositol 1,4,5-trisphosphate. Positions 503, 507, 510, 567, 568, and 569 each coordinate 1D-myo-inositol 1,4,5-trisphosphate. Arginine 743 is a binding site for Ca(2+). 2 positions are modified to phosphoserine: serine 916 and serine 934. Ca(2+) is bound by residues glutamate 1122 and glutamate 1125. Positions 1138-1153 (EVEAGATKDKKERPSD) are enriched in basic and acidic residues. Disordered regions lie at residues 1138–1164 (EVEA…HGEK) and 1807–1835 (NMSD…SFSM). A phosphoserine mark is found at serine 1813, serine 1832, and serine 1834. Ca(2+)-binding residues include glutamate 1881 and glutamate 1945. 3 residues coordinate ATP: alanine 1995, glutamate 2148, and lysine 2151. The chain crosses the membrane as a helical span at residues 2234–2254 (GSPLISLLFWILICFSIAALF). At 2255–2262 (TKRYSVRP) the chain is on the extracellular side. Residues 2263 to 2283 (LIVALILRSIYYLGIGPTLNI) form a helical membrane-spanning segment. At 2284-2292 (LGALNLTNK) the chain is on the cytoplasmic side. Residues 2293 to 2310 (IVFVVSFVGNRGTFIRGY) traverse the membrane as a helical segment. The Extracellular portion of the chain corresponds to 2311–2324 (KAMVMDMEFLYHVG). A helical membrane pass occupies residues 2325 to 2345 (YILTSVLGLFAHELFYSILLF). Residues 2346–2367 (DLIYREETLFNVIKSVTRNGRS) are Cytoplasmic-facing. A helical transmembrane segment spans residues 2368 to 2388 (ILLTALLALILVYLFSIVGFL). Residues 2389-2495 (FLKDDFILEV…ESLFPARVVY (107 aa)) lie on the Extracellular side of the membrane. Cysteine 2454 and cysteine 2460 are disulfide-bonded. A helical membrane pass occupies residues 2496-2516 (DLLFFFIVIIIVLNLIFGVII). The Cytoplasmic portion of the chain corresponds to 2517–2670 (DTFADLRSEK…FVDVQNCMSR (154 aa)). ATP-binding residues include cysteine 2537 and phenylalanine 2538. Cysteine 2537 contacts Zn(2+). Residues cysteine 2540 and histidine 2557 each coordinate Zn(2+). ATP is bound by residues lysine 2559, histidine 2562, asparagine 2563, and methionine 2564. A Zn(2+)-binding site is contributed by histidine 2562. Ca(2+) is bound at residue threonine 2580. A phosphoserine mark is found at serine 2608 and serine 2669.

Belongs to the InsP3 receptor family. In terms of assembly, homodimer. Homotetramer. Interacts with TRPC1, TRPC3, TRPC4. Interacts with TRPV4. Interacts with SIGMAR1. Found in a complex with AKT1 and PML; this interaction modulates IP3R3-phosphorylation and in turn ITPR3-dependent calcium release. Interacts with IRAG2 (via coiled-coil domain). Interacts with CABP1. Interacts with TMBIM4/LFG4. Interacts with CEMIP. Interacts with TESPA1. Interacts with TMEM203. Interacts with BOK; regulates ITPR3 expression. Interacts with BCL2L10. Interacts with CHGA and CHGB. Post-translationally, phosphorylated by AKT1 on serine and/or threonine residues.

It localises to the endoplasmic reticulum membrane. The protein localises to the cytoplasmic vesicle. It is found in the secretory vesicle membrane. The enzyme catalyses Ca(2+)(in) = Ca(2+)(out). With respect to regulation, inositol 1,4,5-trisphosphate-gated calcium channel is regulated by cytosolic calcium in a biphasic manner. At low concentrations, cytosolic calcium binds at a high-affinity juxtamembrane domain (JD) calcium binding site, allowing ITPR3 to activate by escaping a low-energy resting state through an ensemble of preactivated states. At high cytosolic calcium concentrations, ITPR3 preferentially enters an inhibited state stabilized by calcium binding at a second, low-affinity cytoplasmic domain (CD) calcium binding site. Inositol 1,4,5-trisphosphate-gated calcium channel that, upon 1D-myo-inositol 1,4,5-trisphosphate binding, transports calcium from the endoplasmic reticulum lumen to cytoplasm, thus releasing the intracellular calcium and therefore participates in cellular calcium ion homeostasis. 1D-myo-inositol 1,4,5-trisphosphate binds to the ligand-free channel without altering its global conformation, yielding the low-energy resting state, then progresses through resting-to preactivated transitions to the higher energy preactivated state, which increases affinity for calcium, promoting binding of the low basal cytosolic calcium at the juxtamembrane domain (JD) site, favoring the transition through the ensemble of high-energy intermediate states along the trajectory to the fully-open activated state. Upon opening, releases calcium in the cytosol where it can bind to the low-affinity cytoplasmic domain (CD) site and stabilizes the inhibited state to terminate calcium release. This chain is Inositol 1,4,5-trisphosphate-gated calcium channel ITPR3, found in Mus musculus (Mouse).